We begin with the raw amino-acid sequence, 342 residues long: Cytosolic Fe-S cluster assembly factor NBP35 (342 aa).

[4Fe-4S] cluster contacts are provided by C33, C47, C50, and C56. 86 to 93 (GKGGVGKS) contributes to the ATP binding site. C259 and C262 together coordinate [4Fe-4S] cluster.

The protein belongs to the Mrp/NBP35 ATP-binding proteins family. NUBP1/NBP35 subfamily. As to quaternary structure, heterotetramer of 2 NBP35 and 2 CFD1 chains. It depends on [4Fe-4S] cluster as a cofactor.

The protein resides in the cytoplasm. Functionally, component of the cytosolic iron-sulfur (Fe/S) protein assembly (CIA) machinery. Required for maturation of extramitochondrial Fe-S proteins. The NBP35-CFD1 heterotetramer forms a Fe-S scaffold complex, mediating the de novo assembly of an Fe-S cluster and its transfer to target apoproteins. The sequence is that of Cytosolic Fe-S cluster assembly factor NBP35 from Gibberella zeae (strain ATCC MYA-4620 / CBS 123657 / FGSC 9075 / NRRL 31084 / PH-1) (Wheat head blight fungus).